The chain runs to 519 residues: Putative tyrosine carboxypeptidase MATCAP2 (519 aa).

A disordered region spans residues 63–103 (SKEEKKHRSQKRFSSASSKQHRKPSKSPSSSHSKDPSRMTA). His-330 lines the Zn(2+) pocket. Glu-331 serves as the catalytic Nucleophile. His-335 and Glu-366 together coordinate Zn(2+).

Zn(2+) serves as cofactor.

Putative tyrosine carboxypeptidase. In Mus musculus (Mouse), this protein is Putative tyrosine carboxypeptidase MATCAP2.